A 534-amino-acid chain; its full sequence is UDP-glucuronosyltransferase 1A4 (534 aa).

An N-terminal signal peptide occupies residues 1 to 28; the sequence is MARGLQVPLPRLATGLLLLLSVQPWAES. 4 N-linked (GlcNAc...) asparagine glycosylation sites follow: Asn119, Asn142, Asn296, and Asn348. The helical transmembrane segment at 492–508 threads the bilayer; it reads VIGFLLAVVLTVAFITF.

Belongs to the UDP-glycosyltransferase family. Homodimer. Homooligomer. Interacts with UGT1A1, UGT1A3, UGT1A6, UGT1A7, UGT1A8, UGT1A9 and UGT1A10 to form heterodimers. Isoform 1 interacts with isoform 2/i2 suggesting that oligomerization is involved in negative regulation of transferase activity by isoform 2. Isoform 1 also interacts with respective i2 isoforms of UGT1A1, UGT1A3, UGT1A6, UGT1A7, UGT1A8, UGT1A9 and UGT1A10. As to expression, expressed in liver. Expressed in kidney, colon and small intestine. Not expressed in esophagus. Not expressed in skin. In terms of tissue distribution, expressed in liver, kidney, colon, esophagus and small intestine.

It is found in the endoplasmic reticulum membrane. It carries out the reaction glucuronate acceptor + UDP-alpha-D-glucuronate = acceptor beta-D-glucuronoside + UDP + H(+). The catalysed reaction is calcidiol + UDP-alpha-D-glucuronate = calcidiol 25-O-(beta-D-glucuronide) + UDP + H(+). The enzyme catalyses calcidiol + UDP-alpha-D-glucuronate = calcidiol 3-O-(beta-D-glucuronide) + UDP + H(+). It catalyses the reaction calcitriol + UDP-alpha-D-glucuronate = calcitriol 25-O-(beta-D-glucuronide) + UDP + H(+). It carries out the reaction (5Z,8Z,11Z,14Z)-eicosatetraenoate + UDP-alpha-D-glucuronate = O-[(5Z),(8Z),(11Z),(14Z)-eicosatetraenoyl]-beta-D-glucuronate + UDP. The catalysed reaction is 15-hydroxy-(5Z,8Z,11Z,13E)-eicosatetraenoate + UDP-alpha-D-glucuronate = 15-O-(beta-D-glucuronosyl)-(5Z,8Z,11Z,14Z)-eicosatetraenoate + UDP + H(+). The enzyme catalyses 20-hydroxy-(5Z,8Z,11Z,14Z)-eicosatetraenoate + UDP-alpha-D-glucuronate = 20-O-(beta-D-glucuronosyl)-(5Z,8Z,11Z,14Z)-eicosatetraenoate + UDP + H(+). UDP-glucuronosyltransferase (UGT) that catalyzes phase II biotransformation reactions in which lipophilic substrates are conjugated with glucuronic acid to increase the metabolite's water solubility, thereby facilitating excretion into either the urine or bile. Essential for the elimination and detoxification of drugs, xenobiotics and endogenous compounds. Involved in the glucuronidation of calcidiol, which is the major circulating form of vitamin D3 essential for the regulation of calcium and phosphate homeostasis. Also glucuronidates the biologically active form of vitamin D3, calcitriol, probably leading to its biliary transport and intestinal reabsorption. Involved in the glucuronidation of arachidonic acid (AA) and AA-derived eicosanoids including 15-HETE, 20-HETE and PGB1. In terms of biological role, lacks UDP-glucuronosyltransferase (UGT) activity but acts as a negative regulator of isoform 1. The protein is UDP-glucuronosyltransferase 1A4 of Homo sapiens (Human).